We begin with the raw amino-acid sequence, 212 residues long: uncharacterized protein (212 aa).

The N-terminal stretch at 1–20 (MRRVLLCFLTLILLLPAASA) is a signal peptide.

This is an uncharacterized protein from Archaeoglobus fulgidus (strain ATCC 49558 / DSM 4304 / JCM 9628 / NBRC 100126 / VC-16).